The primary structure comprises 331 residues: DNA double-strand break repair nuclease NurA (331 aa).

Mn(2+) is bound by residues aspartate 56 and aspartate 131.

This sequence belongs to the NurA family. In terms of assembly, homodimer. Interacts with SSB. It depends on Mn(2+) as a cofactor.

With respect to regulation, the 5'-3' ssDNA and dsDNA exonuclease and ssDNA endonuclease activities are inhibited by SSB (single-stranded DNA-binding protein). Its function is as follows. Involved in DNA double-strand break (DSB) repair. Probably acts with HerA to stimulate resection of the 5' strand and produce the long 3' single-strand that is required for RadA loading. Exhibits both single-stranded endonuclease activity and 5'-3' exonuclease activity on single-stranded and double-stranded DNA. The chain is DNA double-strand break repair nuclease NurA from Sulfurisphaera tokodaii (strain DSM 16993 / JCM 10545 / NBRC 100140 / 7) (Sulfolobus tokodaii).